The following is a 578-amino-acid chain: PX domain-containing protein kinase-like protein (578 aa).

The PX domain maps to 14–126; it reads LDDTVPLTAA…KFLDPNNYSA (113 aa). Positions 88 to 481 constitute a Protein kinase domain; it reads FIAERQKGLQ…LENSEEHSAK (394 aa). 2 stretches are compositionally biased toward basic residues: residues 437–448 and 457–469; these read IHQHRRLTRAQS and KKRK…KSKR. Disordered regions lie at residues 437–548 and 559–578; these read IHQH…NGMS and FQKG…PKIG. Over residues 483 to 513 the composition is skewed to low complexity; sequence SNSNNSAGSGASSPLTSPSSPTPPSTSGISA. Residues 514 to 530 are compositionally biased toward pro residues; it reads LPPPPPPPPPPAAPLPP. One can recognise a WH2 domain in the interval 548 to 567; sequence SRGALLSSIQNFQKGTLRKA. The span at 568-578 shows a compositional bias: basic and acidic residues; it reads KTCDHSAPKIG.

This sequence belongs to the protein kinase superfamily. Widely expressed in all tissues examined except in heart. Isoform 1 is expressed in high levels in the brain, skeletal muscle, spleen and testis. Isoform 7 expression has yet to be demonstrated.

The protein localises to the cytoplasm. It is found in the cell membrane. In terms of biological role, binds to and modulates brain Na,K-ATPase subunits ATP1B1 and ATP1B3 and may thereby participate in the regulation of electrical excitability and synaptic transmission. May not display kinase activity. This is PX domain-containing protein kinase-like protein from Homo sapiens (Human).